An 87-amino-acid polypeptide reads, in one-letter code: Costars family protein (87 aa).

Belongs to the costars family.

The chain is Costars family protein from Oryza sativa subsp. indica (Rice).